Reading from the N-terminus, the 343-residue chain is Probable beta-1,3-galactosyltransferase 13 (343 aa).

Residues 22–42 (LIVFTSLAIGLTGFLFGLSTI) form a helical; Signal-anchor for type II membrane protein membrane-spanning segment. An N-linked (GlcNAc...) asparagine glycan is attached at asparagine 265.

It belongs to the glycosyltransferase 31 family. Mn(2+) is required as a cofactor.

It is found in the golgi apparatus membrane. It participates in protein modification; protein glycosylation. In terms of biological role, beta-1,3-galactosyltransferase that transfers galactose from UDP-galactose to substrates with a terminal glycosyl residue. This Arabidopsis thaliana (Mouse-ear cress) protein is Probable beta-1,3-galactosyltransferase 13 (B3GALT13).